The sequence spans 369 residues: tRNA-specific 2-thiouridylase MnmA (369 aa).

Residues 12 to 19 (GMSGGVDS) and M38 contribute to the ATP site. The tract at residues 98-100 (NPD) is interaction with target base in tRNA. C103 (nucleophile) is an active-site residue. A disulfide bond links C103 and C200. G128 lines the ATP pocket. The interaction with tRNA stretch occupies residues 150–152 (KDQ). The active-site Cysteine persulfide intermediate is C200. Residues 312-313 (RY) form an interaction with tRNA region.

Belongs to the MnmA/TRMU family. Interacts with TusE.

The protein resides in the cytoplasm. It carries out the reaction S-sulfanyl-L-cysteinyl-[protein] + uridine(34) in tRNA + AH2 + ATP = 2-thiouridine(34) in tRNA + L-cysteinyl-[protein] + A + AMP + diphosphate + H(+). In terms of biological role, catalyzes the 2-thiolation of uridine at the wobble position (U34) of tRNA(Lys), tRNA(Glu) and tRNA(Gln), leading to the formation of s(2)U34, the first step of tRNA-mnm(5)s(2)U34 synthesis. Sulfur is provided by IscS, via a sulfur-relay system. Binds ATP and its substrate tRNAs. The polypeptide is tRNA-specific 2-thiouridylase MnmA (Sodalis glossinidius (strain morsitans)).